Reading from the N-terminus, the 462-residue chain is uncharacterized protein (462 aa).

This is an uncharacterized protein from Acanthamoeba polyphaga (Amoeba).